The sequence spans 206 residues: Small ribosomal subunit protein uS4 (206 aa).

The S4 RNA-binding domain maps to 96-156; sequence CRLDNVVYRM…EKAKNQLRIV (61 aa).

The protein belongs to the universal ribosomal protein uS4 family. In terms of assembly, part of the 30S ribosomal subunit. Contacts protein S5. The interaction surface between S4 and S5 is involved in control of translational fidelity.

Its function is as follows. One of the primary rRNA binding proteins, it binds directly to 16S rRNA where it nucleates assembly of the body of the 30S subunit. With S5 and S12 plays an important role in translational accuracy. This chain is Small ribosomal subunit protein uS4, found in Pseudomonas fluorescens (strain SBW25).